The sequence spans 54 residues: MARSETRPVVTLRSTAGTGRSYVTRKNRRNDPDRLELRKFDPAVGRHVLFREVR.

This sequence belongs to the bacterial ribosomal protein bL33 family.

This chain is Large ribosomal subunit protein bL33C, found in Streptomyces griseus subsp. griseus (strain JCM 4626 / CBS 651.72 / NBRC 13350 / KCC S-0626 / ISP 5235).